The sequence spans 2185 residues: Genome polyprotein (2185 aa).

Glycine 2 carries N-myristoyl glycine; by host lipidation. Residues 2–1495 are Cytoplasmic-facing; it reads GAQVSTQKTG…HVSRAFICLQ (1494 aa). The amphipathic alpha-helix stretch occupies residues 568–584; that stretch reads FFQGPVEDAITAAIGRV. Active-site for protease 2A activity residues include histidine 872 and aspartate 890. Positions 907 and 909 each coordinate Zn(2+). Cysteine 961 acts as the For protease 2A activity in catalysis. Positions 967 and 969 each coordinate Zn(2+). The membrane-binding stretch occupies residues 1101 to 1173; the sequence is NNSWLKKFTE…EQSAPSQSDQ (73 aa). An oligomerization region spans residues 1101–1239; it reads NNSWLKKFTE…SPGAGKSVAT (139 aa). The segment at 1122-1126 is RNA-binding; the sequence is AVKIQ. An SF3 helicase domain is found at 1205-1361; sequence EKKMSNYIQF…SMYSQNGKIN (157 aa). Residues cysteine 1369, cysteine 1381, and cysteine 1386 each contribute to the Zn(2+) site. The segment at 1369–1386 adopts a C4-type; degenerate zinc-finger fold; the sequence is CDDECCPVNFKKCCPLVC. The RNA-binding stretch occupies residues 1413-1420; it reads EYNHRHSV. Residues 1424–1429 are oligomerization; it reads LEALFQ. The stretch at 1496 to 1511 is an intramembrane region; that stretch reads ALTTFVSVAGIIYIIY. Topologically, residues 1512–2185 are cytoplasmic; the sequence is KLFAGFQGAY…TLRRKWLDSF (674 aa). An O-(5'-phospho-RNA)-tyrosine modification is found at tyrosine 1521. The Peptidase C3 domain maps to 1541–1719; sequence GPAFEFAVAM…FSAALLKHYF (179 aa). Catalysis depends on for protease 3C activity residues histidine 1580, glutamate 1611, and cysteine 1687. Positions 1950–2066 constitute a RdRp catalytic domain; the sequence is GHLIAFDYSG…SYPWPIDASL (117 aa). Mg(2+) is bound by residues aspartate 1956 and aspartate 2052.

This sequence belongs to the picornaviruses polyprotein family. In terms of assembly, interacts with capsid protein VP1 and capsid protein VP3 to form heterotrimeric protomers. Interacts with capsid protein VP0, and capsid protein VP3 to form heterotrimeric protomers. Five protomers subsequently associate to form pentamers which serve as building blocks for the capsid. Interacts with capsid protein VP2, capsid protein VP3 and capsid protein VP4 following cleavage of capsid protein VP0. Interacts with host CD55. Interacts with host CXADR. As to quaternary structure, interacts with capsid protein VP1 and capsid protein VP3 in the mature capsid. In terms of assembly, interacts with capsid protein VP0 and capsid protein VP1 to form heterotrimeric protomers. Five protomers subsequently associate to form pentamers which serve as building blocks for the capsid. Interacts with capsid protein VP4 in the mature capsid. Interacts with protein 2C; this interaction may be important for virion morphogenesis. Interacts with capsid protein VP1 and capsid protein VP3. As to quaternary structure, homodimer. In terms of assembly, homohexamer; forms a hexameric ring structure with 6-fold symmetry characteristic of AAA+ ATPases. Interacts (via N-terminus) with host RTN3 (via reticulon domain); this interaction is important for viral replication. Interacts with capsid protein VP3; this interaction may be important for virion morphogenesis. Interacts with protein 3CD. As to quaternary structure, homodimer. Interacts with host GBF1. Interacts (via GOLD domain) with host ACBD3 (via GOLD domain); this interaction allows the formation of a viral protein 3A/ACBD3 heterotetramer with a 2:2 stoichiometry, which will stimulate the recruitment of host PI4KB in order to synthesize PI4P at the viral RNA replication sites. In terms of assembly, interacts with RNA-directed RNA polymerase. Interacts with host TICAM1 (via C-terminus). As to quaternary structure, interacts with protein 3AB and with RNA-directed RNA polymerase. In terms of assembly, interacts with Viral protein genome-linked and with protein 3CD. It depends on Mg(2+) as a cofactor. Specific enzymatic cleavages in vivo by the viral proteases yield processing intermediates and the mature proteins. Post-translationally, myristoylation is required for the formation of pentamers during virus assembly. Further assembly of 12 pentamers and a molecule of genomic RNA generates the provirion. In terms of processing, during virion maturation, immature virions are rendered infectious following cleavage of VP0 into VP4 and VP2. This maturation seems to be an autocatalytic event triggered by the presence of RNA in the capsid and it is followed by a conformational change infectious virion. Myristoylation is required during RNA encapsidation and formation of the mature virus particle. Post-translationally, VPg is uridylylated by the polymerase into VPg-pUpU. This acts as a nucleotide-peptide primer for the genomic RNA replication.

It localises to the virion. Its subcellular location is the host cytoplasm. The protein localises to the host cytoplasmic vesicle membrane. The protein resides in the host nucleus. It carries out the reaction a ribonucleoside 5'-triphosphate + H2O = a ribonucleoside 5'-diphosphate + phosphate + H(+). The enzyme catalyses Selective cleavage of Tyr-|-Gly bond in the picornavirus polyprotein.. It catalyses the reaction RNA(n) + a ribonucleoside 5'-triphosphate = RNA(n+1) + diphosphate. The catalysed reaction is Selective cleavage of Gln-|-Gly bond in the poliovirus polyprotein. In other picornavirus reactions Glu may be substituted for Gln, and Ser or Thr for Gly.. Replication or transcription is subject to high level of random mutations by the nucleotide analog ribavirin. Its function is as follows. Forms an icosahedral capsid of pseudo T=3 symmetry with capsid proteins VP2 and VP3. The capsid is 300 Angstroms in diameter, composed of 60 copies of each capsid protein and enclosing the viral positive strand RNA genome. Capsid protein VP1 mainly forms the vertices of the capsid. Capsid protein VP1 interacts with host CD55 and CXADR to provide virion attachment to target host cells. This attachment induces virion internalization. Tyrosine kinases are probably involved in the entry process. After binding to its receptor, the capsid undergoes conformational changes. Capsid protein VP1 N-terminus (that contains an amphipathic alpha-helix) and capsid protein VP4 are externalized. Together, they shape a pore in the host membrane through which viral genome is translocated to host cell cytoplasm. In terms of biological role, forms an icosahedral capsid of pseudo T=3 symmetry with capsid proteins VP2 and VP3. The capsid is 300 Angstroms in diameter, composed of 60 copies of each capsid protein and enclosing the viral positive strand RNA genome. Functionally, lies on the inner surface of the capsid shell. After binding to the host receptor, the capsid undergoes conformational changes. Capsid protein VP4 is released, Capsid protein VP1 N-terminus is externalized, and together, they shape a pore in the host membrane through which the viral genome is translocated into the host cell cytoplasm. Component of immature procapsids, which is cleaved into capsid proteins VP4 and VP2 after maturation. Allows the capsid to remain inactive before the maturation step. Its function is as follows. Cysteine protease that cleaves viral polyprotein and specific host proteins. It is responsible for the autocatalytic cleavage between the P1 and P2 regions, which is the first cleavage occurring in the polyprotein. Also cleaves the host translation initiation factor EIF4G1, in order to shut down the capped cellular mRNA translation. Inhibits the host nucleus-cytoplasm protein and RNA trafficking by cleaving host members of the nuclear pores. Counteracts stress granule formation probably by antagonizing its assembly or promoting its dissassembly. Cleaves and inhibits host IFIH1/MDA5, thereby inhibiting the type-I IFN production and the establishment of the antiviral state. Cleaves and inhibits host MAVS, thereby inhibiting the type-I IFN production and the establishment of the antiviral state. In terms of biological role, plays an essential role in the virus replication cycle by acting as a viroporin. Creates a pore in the host endoplasmic reticulum and as a consequence releases Ca2+ in the cytoplasm of infected cell. In turn, high levels of cytoplasmic calcium may trigger membrane trafficking and transport of viral ER-associated proteins to viroplasms, sites of viral genome replication. Functionally, induces and associates with structural rearrangements of intracellular membranes. Displays RNA-binding, nucleotide binding and NTPase activities. May play a role in virion morphogenesis and viral RNA encapsidation by interacting with the capsid protein VP3. Localizes the viral replication complex to the surface of membranous vesicles. Together with protein 3CD binds the Cis-Active RNA Element (CRE) which is involved in RNA synthesis initiation. Acts as a cofactor to stimulate the activity of 3D polymerase, maybe through a nucleid acid chaperone activity. Its function is as follows. Localizes the viral replication complex to the surface of membranous vesicles. It inhibits host cell endoplasmic reticulum-to-Golgi apparatus transport and causes the disassembly of the Golgi complex, possibly through GBF1 interaction. This would result in depletion of MHC, trail receptors and IFN receptors at the host cell surface. Plays an essential role in viral RNA replication by recruiting ACBD3 and PI4KB at the viral replication sites, thereby allowing the formation of the rearranged membranous structures where viral replication takes place. In terms of biological role, acts as a primer for viral RNA replication and remains covalently bound to viral genomic RNA. VPg is uridylylated prior to priming replication into VPg-pUpU. The oriI viral genomic sequence may act as a template for this. The VPg-pUpU is then used as primer on the genomic RNA poly(A) by the RNA-dependent RNA polymerase to replicate the viral genome. During genome replication, the VPg-RNA linkage is removed by the host TDP2, thereby accelerating replication. During the late stage of the replication cycle, host TDP2 is excluded from sites of viral RNA synthesis and encapsidation, allowing for the generation of progeny virions. Functionally, involved in the viral replication complex and viral polypeptide maturation. It exhibits protease activity with a specificity and catalytic efficiency that is different from protease 3C. Protein 3CD lacks polymerase activity. Protein 3CD binds to the 5'UTR of the viral genome. Major viral protease that mediates proteolytic processing of the polyprotein. Cleaves host EIF5B, contributing to host translation shutoff. Cleaves also host PABPC1, contributing to host translation shutoff. Cleaves and inhibits host RIGI, thereby inhibiting the type-I IFN production and the establishment of the antiviral state. Cleaves and inhibits host MAVS, thereby inhibiting the type-I IFN production and the establishment of the antiviral state. Cleaves and inhibits host TICAM1/TRIF, thereby inhibiting the type-I IFN production. Cleaves host NLRP1, triggers host N-glycine-mediated degradation of the autoinhibitory NLRP1 N-terminal fragment. Cleaves host transcription factor TFEB, thereby disrupting host lysosomal functions and enhancing viral infection. Its function is as follows. Replicates the viral genomic RNA on the surface of intracellular membranes. May form linear arrays of subunits that propagate along a strong head-to-tail interaction called interface-I. Covalently attaches UMP to a tyrosine of VPg, which is used to prime RNA synthesis. The positive stranded RNA genome is first replicated at virus induced membranous vesicles, creating a dsRNA genomic replication form. This dsRNA is then used as template to synthesize positive stranded RNA genomes. ss(+)RNA genomes are either translated, replicated or encapsidated. The protein is Genome polyprotein of Coxsackievirus B3 (strain Nancy).